A 66-amino-acid chain; its full sequence is Large ribosomal subunit protein bL33c (66 aa).

The protein belongs to the bacterial ribosomal protein bL33 family.

It is found in the plastid. The protein resides in the chloroplast. In Aethionema cordifolium (Lebanon stonecress), this protein is Large ribosomal subunit protein bL33c.